A 284-amino-acid polypeptide reads, in one-letter code: 2-dehydro-3-deoxyphosphooctonate aldolase (284 aa).

The protein belongs to the KdsA family.

The protein localises to the cytoplasm. The enzyme catalyses D-arabinose 5-phosphate + phosphoenolpyruvate + H2O = 3-deoxy-alpha-D-manno-2-octulosonate-8-phosphate + phosphate. It participates in carbohydrate biosynthesis; 3-deoxy-D-manno-octulosonate biosynthesis; 3-deoxy-D-manno-octulosonate from D-ribulose 5-phosphate: step 2/3. The protein operates within bacterial outer membrane biogenesis; lipopolysaccharide biosynthesis. This is 2-dehydro-3-deoxyphosphooctonate aldolase from Vibrio vulnificus (strain CMCP6).